The chain runs to 609 residues: MPDYRSKTSTHGRNMAGARGLWRATGMKDEDFGKPIIAVVNSFTQFVPGHVHLKDLGQLVAAEIQAAGGVAKEFNTIAVDDGIAMGHDGMLYSLPSRDLIADSVEYMVNAHCADAMVCISNCDKITPGMLMAAMRLNIPVVFVSGGPMEAGKVKFRGDEKAIDLVDAMVVAADDSYTDEEVAEFERSACPTCGSCSGMFTANSMNCLTEALGLSLPGNGSIVATHANRKKLFLKAGQLIVELAKRYYEQNDASILPRSIATKAAFKNAMTLDIAMGGSTNTVLHLLAAANEAEVDFTMDDIDELSRRVPVLSKVAPAKQDVHMEDVHRAGGIMAILGELDRANLLDVSVPTVHEKTLKDALDKWDIIRTEDPDVYEFYRSSPGGVPTQVAFSQNRYYSTLDGDREKGVIRNAEHAFSKDGGLAVLYGNIALDGCIVKTAGVDESILKFTGSARVFESQDAAVEAILGNEIKAGDVVVIRYEGPRGGPGMQEMLYPTSYLKSKGLGKDCALVTDGRFSGGSSGLSIGHVSPEAAEGGAIGLVEDGDTIEIDIPNRTIHLNIDDATLAHRRTVQEAKGWHPKEERKRKVSKALKVYAMHTTSAAKGAVRIL.

Asp81 contacts Mg(2+). Cys122 contacts [2Fe-2S] cluster. 2 residues coordinate Mg(2+): Asp123 and Lys124. Lys124 carries the N6-carboxylysine modification. Cys195 is a [2Fe-2S] cluster binding site. Glu491 contributes to the Mg(2+) binding site. Ser517 serves as the catalytic Proton acceptor.

This sequence belongs to the IlvD/Edd family. Homodimer. Requires [2Fe-2S] cluster as cofactor. Mg(2+) is required as a cofactor.

The catalysed reaction is (2R)-2,3-dihydroxy-3-methylbutanoate = 3-methyl-2-oxobutanoate + H2O. It catalyses the reaction (2R,3R)-2,3-dihydroxy-3-methylpentanoate = (S)-3-methyl-2-oxopentanoate + H2O. Its pathway is amino-acid biosynthesis; L-isoleucine biosynthesis; L-isoleucine from 2-oxobutanoate: step 3/4. It functions in the pathway amino-acid biosynthesis; L-valine biosynthesis; L-valine from pyruvate: step 3/4. Functions in the biosynthesis of branched-chain amino acids. Catalyzes the dehydration of (2R,3R)-2,3-dihydroxy-3-methylpentanoate (2,3-dihydroxy-3-methylvalerate) into 2-oxo-3-methylpentanoate (2-oxo-3-methylvalerate) and of (2R)-2,3-dihydroxy-3-methylbutanoate (2,3-dihydroxyisovalerate) into 2-oxo-3-methylbutanoate (2-oxoisovalerate), the penultimate precursor to L-isoleucine and L-valine, respectively. This Acinetobacter baumannii (strain ATCC 17978 / DSM 105126 / CIP 53.77 / LMG 1025 / NCDC KC755 / 5377) protein is Dihydroxy-acid dehydratase.